The following is a 423-amino-acid chain: ATP-citrate synthase alpha chain protein 2 (423 aa).

Residues asparagine 343, threonine 345, and arginine 376 each contribute to the citrate site.

The protein belongs to the succinate/malate CoA ligase beta subunit family. Heterooctamer of 4 alpha and 4 beta chains.

The protein localises to the cytoplasm. The protein resides in the cytosol. The catalysed reaction is oxaloacetate + acetyl-CoA + ADP + phosphate = citrate + ATP + CoA. In terms of biological role, ATP citrate-lyase is the primary enzyme responsible for the synthesis of cytosolic acetyl-CoA, used for the elongation of fatty acids and biosynthesis of isoprenoids, flavonoids and malonated derivatives. May supply substrate to the cytosolic acetyl-CoA carboxylase, which generates the malonyl-CoA used for the synthesis of a multitude of compounds, including very long chain fatty acids and flavonoids. Required for normal growth and development and elongation of C18 fatty acids to C20 to C24 fatty acids in seeds. In contrast to all known animal ACL enzymes having a homomeric structure, plant ACLs are composed of alpha and beta chains. This chain is ATP-citrate synthase alpha chain protein 2 (ACLA-2), found in Arabidopsis thaliana (Mouse-ear cress).